Consider the following 397-residue polypeptide: ATP-dependent RNA helicase eIF4A (397 aa).

Positions 23–51 match the Q motif motif; sequence YKFDDLNLKPNIVRGIFGYGYETPSAIQQ. The Helicase ATP-binding domain occupies 54-224; it reads ILPITEGRDV…TKFMNNPVRI (171 aa). 67-74 lines the ATP pocket; sequence AQSGTGKT. The DEAD box signature appears at 172-175; sequence DEAD. Residues 255-396 form the Helicase C-terminal domain; it reads DLYDSISVTQ…EMPADIGSLF (142 aa).

This sequence belongs to the DEAD box helicase family. eIF4A subfamily. As to quaternary structure, component of the eIF4F complex, which composition varies with external and internal environmental conditions. It is composed of at least eIF4A, eIF4E and eIF4G.

It localises to the cytoplasm. It carries out the reaction ATP + H2O = ADP + phosphate + H(+). In terms of biological role, ATP-dependent RNA helicase which is a subunit of the eIF4F complex involved in cap recognition and is required for mRNA binding to ribosome. In the current model of translation initiation, eIF4A unwinds RNA secondary structures in the 5'-UTR of mRNAs which is necessary to allow efficient binding of the small ribosomal subunit, and subsequent scanning for the initiator codon. This Lodderomyces elongisporus (strain ATCC 11503 / CBS 2605 / JCM 1781 / NBRC 1676 / NRRL YB-4239) (Yeast) protein is ATP-dependent RNA helicase eIF4A (TIF1).